Here is a 1047-residue protein sequence, read N- to C-terminus: Probable alpha-mannosidase At5g66150 (1047 aa).

The first 27 residues, 1–27 (MEKPGMSLLKGSLCVIVFLLLLSLVES), serve as a signal peptide directing secretion. Zn(2+) contacts are provided by H56, D58, and D178. N-linked (GlcNAc...) asparagine glycans are attached at residues N280, N287, and N345. A Zn(2+)-binding site is contributed by H419. Disulfide bonds link C455-C465 and C476-C484. N-linked (GlcNAc...) asparagine glycosylation is found at N480, N508, N541, N605, N606, N668, N780, and N857. A disulfide bridge links C855 with C860.

The protein belongs to the glycosyl hydrolase 38 family. Homodimer. Requires Zn(2+) as cofactor.

The protein resides in the vacuole. The enzyme catalyses Hydrolysis of terminal, non-reducing alpha-D-mannose residues in alpha-D-mannosides.. In terms of biological role, liberates mannose from p-nitrophenyl-alpha-D-mannoside in vitro. The sequence is that of Probable alpha-mannosidase At5g66150 from Arabidopsis thaliana (Mouse-ear cress).